The primary structure comprises 344 residues: 2,3,4,5-tetrahydropyridine-2,6-dicarboxylate N-succinyltransferase (344 aa).

Residue Glu205 participates in Mg(2+) binding. Glu221 (acyl-anhydride intermediate) is an active-site residue. Succinyl-CoA-binding positions include Arg223, Gly238, Ser241, Ala264, 279–280, Gly287, Lys304, and 317–320; these read EA and RRNS.

Belongs to the type 2 tetrahydrodipicolinate N-succinyltransferase family. Homotrimer.

It is found in the cytoplasm. The enzyme catalyses (S)-2,3,4,5-tetrahydrodipicolinate + succinyl-CoA + H2O = (S)-2-succinylamino-6-oxoheptanedioate + CoA. The protein operates within amino-acid biosynthesis; L-lysine biosynthesis via DAP pathway; LL-2,6-diaminopimelate from (S)-tetrahydrodipicolinate (succinylase route): step 1/3. In terms of biological role, catalyzes the conversion of the cyclic tetrahydrodipicolinate (THDP) into the acyclic N-succinyl-L-2-amino-6-oxopimelate using succinyl-CoA. This Pseudomonas paraeruginosa (strain DSM 24068 / PA7) (Pseudomonas aeruginosa (strain PA7)) protein is 2,3,4,5-tetrahydropyridine-2,6-dicarboxylate N-succinyltransferase.